The primary structure comprises 466 residues: Cysteine--tRNA ligase (466 aa).

Residue C28 coordinates Zn(2+). The 'HIGH' region signature appears at 30 to 40; the sequence is PTVYNFFHIGN. 3 residues coordinate Zn(2+): C208, H233, and E237. The 'KMSKS' region motif lies at 265 to 269; it reads KMSKS. K268 contacts ATP.

It belongs to the class-I aminoacyl-tRNA synthetase family. In terms of assembly, monomer. The cofactor is Zn(2+).

Its subcellular location is the cytoplasm. The catalysed reaction is tRNA(Cys) + L-cysteine + ATP = L-cysteinyl-tRNA(Cys) + AMP + diphosphate. This is Cysteine--tRNA ligase from Clostridium perfringens (strain SM101 / Type A).